A 370-amino-acid polypeptide reads, in one-letter code: 3-isopropylmalate dehydrogenase (370 aa).

An NAD(+)-binding site is contributed by 76-89 (GPKWDQNPSELRPE). 4 residues coordinate substrate: Arg-96, Arg-106, Arg-134, and Asp-224. Mg(2+) is bound by residues Asp-224, Asp-248, and Asp-252. 282 to 294 (GSAPDIAGQNIAN) contributes to the NAD(+) binding site.

The protein belongs to the isocitrate and isopropylmalate dehydrogenases family. LeuB type 1 subfamily. In terms of assembly, homodimer. Mg(2+) serves as cofactor. Mn(2+) is required as a cofactor.

The protein localises to the cytoplasm. The enzyme catalyses (2R,3S)-3-isopropylmalate + NAD(+) = 4-methyl-2-oxopentanoate + CO2 + NADH. Its pathway is amino-acid biosynthesis; L-leucine biosynthesis; L-leucine from 3-methyl-2-oxobutanoate: step 3/4. Functionally, catalyzes the oxidation of 3-carboxy-2-hydroxy-4-methylpentanoate (3-isopropylmalate) to 3-carboxy-4-methyl-2-oxopentanoate. The product decarboxylates to 4-methyl-2 oxopentanoate. The protein is 3-isopropylmalate dehydrogenase of Bacillus licheniformis (strain ATCC 14580 / DSM 13 / JCM 2505 / CCUG 7422 / NBRC 12200 / NCIMB 9375 / NCTC 10341 / NRRL NRS-1264 / Gibson 46).